We begin with the raw amino-acid sequence, 237 residues long: Thrombin-like enzyme agkihpin-2 (237 aa).

A propeptide is located at residue M1. A Peptidase S1 domain is found at 2–228; it reads ILGDDECNIN…HLDWIENIIA (227 aa). Cysteines 27 and 43 form a disulfide. H42 (charge relay system) is an active-site residue. N80 carries an N-linked (GlcNAc...) asparagine glycan. Residue D87 is the Charge relay system of the active site. Cystine bridges form between C119-C189, C151-C168, and C179-C204. S183 (charge relay system) is an active-site residue.

The protein belongs to the peptidase S1 family. Snake venom subfamily. As to expression, expressed by the venom gland (at protein level). Expressed by the venom gland.

It is found in the secreted. The hydrolysis of TAMe (tosyl-arginine methyl ester) substrate is activated by Ca(2+), Fe(3+), Mg(2+) and Zn(2+), and inhibited by EDTA, PMSF and DTT. Thrombin-like enzyme that shows fibrinogenolytic activity against bovine fibrinogen alpha and beta chains, but not gamma chain. Hydrolyzes fibrin. Enhances ADP-induced human platelet aggregation. Has arginine esterase activity for TAMe (tosyl-arginine methyl ester) substrate. Reduces thrombin-induced thrombosis. Does not have hemorrhagic activity. Reduces the motility of human liver cancer HepG2 cells in a wound-healing assay. The polypeptide is Thrombin-like enzyme agkihpin-2 (Gloydius halys (Chinese water mocassin)).